The chain runs to 92 residues: Small ribosomal subunit protein uS17 (92 aa).

This sequence belongs to the universal ribosomal protein uS17 family. In terms of assembly, part of the 30S ribosomal subunit.

One of the primary rRNA binding proteins, it binds specifically to the 5'-end of 16S ribosomal RNA. The chain is Small ribosomal subunit protein uS17 from Cupriavidus metallidurans (strain ATCC 43123 / DSM 2839 / NBRC 102507 / CH34) (Ralstonia metallidurans).